Reading from the N-terminus, the 490-residue chain is N-succinylglutamate 5-semialdehyde dehydrogenase (490 aa).

223–228 is a binding site for NAD(+); the sequence is GSSRTG. Residues Glu246 and Cys280 contribute to the active site.

The protein belongs to the aldehyde dehydrogenase family. AstD subfamily.

The catalysed reaction is N-succinyl-L-glutamate 5-semialdehyde + NAD(+) + H2O = N-succinyl-L-glutamate + NADH + 2 H(+). It functions in the pathway amino-acid degradation; L-arginine degradation via AST pathway; L-glutamate and succinate from L-arginine: step 4/5. In terms of biological role, catalyzes the NAD-dependent reduction of succinylglutamate semialdehyde into succinylglutamate. The sequence is that of N-succinylglutamate 5-semialdehyde dehydrogenase from Pseudoalteromonas atlantica (strain T6c / ATCC BAA-1087).